A 758-amino-acid polypeptide reads, in one-letter code: 5-methyltetrahydropteroyltriglutamate--homocysteine methyltransferase (758 aa).

5-methyltetrahydropteroyltri-L-glutamate-binding positions include 16–19 (RELK) and lysine 117. L-homocysteine-binding positions include 436-438 (IGS) and glutamate 489. L-methionine-binding positions include 436–438 (IGS) and glutamate 489. 5-methyltetrahydropteroyltri-L-glutamate is bound by residues 520–521 (RC) and tryptophan 566. Aspartate 604 serves as a coordination point for L-homocysteine. Aspartate 604 lines the L-methionine pocket. 5-methyltetrahydropteroyltri-L-glutamate is bound at residue glutamate 610. Zn(2+)-binding residues include histidine 646, cysteine 648, and glutamate 670. Histidine 699 serves as the catalytic Proton donor. Cysteine 731 provides a ligand contact to Zn(2+).

The protein belongs to the vitamin-B12 independent methionine synthase family. Requires Zn(2+) as cofactor.

The enzyme catalyses 5-methyltetrahydropteroyltri-L-glutamate + L-homocysteine = tetrahydropteroyltri-L-glutamate + L-methionine. It participates in amino-acid biosynthesis; L-methionine biosynthesis via de novo pathway; L-methionine from L-homocysteine (MetE route): step 1/1. Catalyzes the transfer of a methyl group from 5-methyltetrahydrofolate to homocysteine resulting in methionine formation. This is 5-methyltetrahydropteroyltriglutamate--homocysteine methyltransferase from Ruthia magnifica subsp. Calyptogena magnifica.